We begin with the raw amino-acid sequence, 312 residues long: Ribosomal protein L11 methyltransferase (312 aa).

S-adenosyl-L-methionine is bound by residues threonine 160, glycine 181, aspartate 203, and asparagine 246.

Belongs to the methyltransferase superfamily. PrmA family.

It is found in the cytoplasm. The enzyme catalyses L-lysyl-[protein] + 3 S-adenosyl-L-methionine = N(6),N(6),N(6)-trimethyl-L-lysyl-[protein] + 3 S-adenosyl-L-homocysteine + 3 H(+). Methylates ribosomal protein L11. The chain is Ribosomal protein L11 methyltransferase from Staphylococcus epidermidis (strain ATCC 12228 / FDA PCI 1200).